Consider the following 452-residue polypeptide: Bifunctional protein GlmU (452 aa).

A pyrophosphorylase region spans residues 1-232; the sequence is MTSRTSLTIV…EDEVRGINTK (232 aa). UDP-N-acetyl-alpha-D-glucosamine-binding positions include 11-14, Lys25, Gln78, and 83-84; these read LAAG and GT. Asp108 is a binding site for Mg(2+). Positions 144, 158, 173, and 230 each coordinate UDP-N-acetyl-alpha-D-glucosamine. Asn230 contacts Mg(2+). Residues 233–253 are linker; the sequence is AQLAEAEAVMQARLRQAALDA. The interval 254 to 452 is N-acetyltransferase; sequence GVTMIAPETV…KTRGKTRPAK (199 aa). Positions 319 and 337 each coordinate UDP-N-acetyl-alpha-D-glucosamine. His349 acts as the Proton acceptor in catalysis. UDP-N-acetyl-alpha-D-glucosamine contacts are provided by Tyr352 and Asn363. Residues Ala366, 372–373, Ser391, Ser409, and Arg426 contribute to the acetyl-CoA site; that span reads NY.

This sequence in the N-terminal section; belongs to the N-acetylglucosamine-1-phosphate uridyltransferase family. The protein in the C-terminal section; belongs to the transferase hexapeptide repeat family. In terms of assembly, homotrimer. Mg(2+) is required as a cofactor.

The protein resides in the cytoplasm. The enzyme catalyses alpha-D-glucosamine 1-phosphate + acetyl-CoA = N-acetyl-alpha-D-glucosamine 1-phosphate + CoA + H(+). It catalyses the reaction N-acetyl-alpha-D-glucosamine 1-phosphate + UTP + H(+) = UDP-N-acetyl-alpha-D-glucosamine + diphosphate. It functions in the pathway nucleotide-sugar biosynthesis; UDP-N-acetyl-alpha-D-glucosamine biosynthesis; N-acetyl-alpha-D-glucosamine 1-phosphate from alpha-D-glucosamine 6-phosphate (route II): step 2/2. Its pathway is nucleotide-sugar biosynthesis; UDP-N-acetyl-alpha-D-glucosamine biosynthesis; UDP-N-acetyl-alpha-D-glucosamine from N-acetyl-alpha-D-glucosamine 1-phosphate: step 1/1. It participates in bacterial outer membrane biogenesis; LPS lipid A biosynthesis. Its function is as follows. Catalyzes the last two sequential reactions in the de novo biosynthetic pathway for UDP-N-acetylglucosamine (UDP-GlcNAc). The C-terminal domain catalyzes the transfer of acetyl group from acetyl coenzyme A to glucosamine-1-phosphate (GlcN-1-P) to produce N-acetylglucosamine-1-phosphate (GlcNAc-1-P), which is converted into UDP-GlcNAc by the transfer of uridine 5-monophosphate (from uridine 5-triphosphate), a reaction catalyzed by the N-terminal domain. This chain is Bifunctional protein GlmU, found in Rhodopseudomonas palustris (strain BisA53).